The chain runs to 212 residues: Octanoyltransferase (212 aa).

One can recognise a BPL/LPL catalytic domain in the interval 30–205 (ETTVDELWCL…ELVEGLGHSQ (176 aa)). Substrate is bound by residues 69–76 (RGGQVTYH), 136–138 (SLG), and 149–151 (GLA). Cys-167 functions as the Acyl-thioester intermediate in the catalytic mechanism.

The protein belongs to the LipB family.

It localises to the cytoplasm. It carries out the reaction octanoyl-[ACP] + L-lysyl-[protein] = N(6)-octanoyl-L-lysyl-[protein] + holo-[ACP] + H(+). The protein operates within protein modification; protein lipoylation via endogenous pathway; protein N(6)-(lipoyl)lysine from octanoyl-[acyl-carrier-protein]: step 1/2. In terms of biological role, catalyzes the transfer of endogenously produced octanoic acid from octanoyl-acyl-carrier-protein onto the lipoyl domains of lipoate-dependent enzymes. Lipoyl-ACP can also act as a substrate although octanoyl-ACP is likely to be the physiological substrate. The sequence is that of Octanoyltransferase from Marinobacter nauticus (strain ATCC 700491 / DSM 11845 / VT8) (Marinobacter aquaeolei).